The following is a 5099-amino-acid chain: Malformin synthetase mlfA (5099 aa).

The interval 224-615 (QRHAADRPHS…CGRADTQVKL (392 aa)) is adenylation 1. Residues 756-829 (THLENEIQLA…EAASLAKVRD (74 aa)) form the Carrier 1 domain. Residue serine 790 is modified to O-(pantetheine 4'-phosphoryl)serine. Residues 867-1297 (EDVFPCTSMQ…PVDSLTLLKP (431 aa)) form a condensation 1 region. An adenylation 2 region spans residues 1325–1717 (DRWVNRQPDT…GRKDTQVKLR (393 aa)). The Carrier 2 domain occupies 1857 to 1934 (ARAPELERTL…QIATQCEGIA (78 aa)). Serine 1894 is subject to O-(pantetheine 4'-phosphoryl)serine. Residues 1995–2040 (MQQESSSSPAPSVSSSSSSSSAPKPLLAQPEPPTNLRDSVPEPFSL) are disordered. A compositionally biased stretch (low complexity) spans 1999-2017 (SSSSPAPSVSSSSSSSSAP). The tract at residues 2067–2482 (EDIYPATPLQ…ALSPGDKKVL (416 aa)) is condensation 2. The interval 2505-2897 (LSTPHAPAVC…VGRKDGQLKL (393 aa)) is adenylation 3. One can recognise a Carrier 3 domain in the interval 3032–3108 (RPATAQERGL…RLVLHLQNTS (77 aa)). An O-(pantetheine 4'-phosphoryl)serine modification is found at serine 3069. Condensation regions lie at residues 3125-3589 (WVHL…TYDQ) and 3610-4033 (DIYP…QQAM). Residues 4058–4446 (YANREAVCAW…VGRKDSQIKF (389 aa)) are adenylation 4. In terms of domain architecture, Carrier 4 spans 4581 to 4657 (PPSTGMQQGI…DLAEHISSRV (77 aa)). Serine 4618 is subject to O-(pantetheine 4'-phosphoryl)serine. Residues 4696 to 5017 (DILPTTGFQR…LQTVVQHQNV (322 aa)) are condensation 5.

Belongs to the NRP synthetase family.

It functions in the pathway secondary metabolite biosynthesis. In terms of biological role, nonribosomal peptide synthetase; part of the gene cluster that mediates the biosynthesis of malformins, cyclic pentapeptides with a disulfide bond between 2 consecutive cysteins, that show potential anti-tumor as well as antimalarial and antitrypanosomal properties. The nonribosomal peptide synthetase mlfA is responsible of the formation of the cyclic pentapeptide. The malformin biosynthesis clusters in malformin-producing fungi also contain enzymes involved in the formation of the disulfide bond between the two consecutive cysteins within malformins, in addition to additional tailoring enzymes such as methyltransferases or oxidoreductases. They are also composed of up to 4 major facilitator superfamily transporters, and transcription factors probably involved in the regulation of the expression of those clusters. The chain is Malformin synthetase mlfA from Aspergillus sclerotiicarbonarius (strain CBS 121057 / IBT 28362).